The chain runs to 60 residues: Translational regulator CsrA (60 aa).

This sequence belongs to the CsrA/RsmA family. In terms of assembly, homodimer; the beta-strands of each monomer intercalate to form a hydrophobic core, while the alpha-helices form wings that extend away from the core.

It is found in the cytoplasm. In terms of biological role, a key translational regulator that binds mRNA to regulate translation initiation and/or mRNA stability. Mediates global changes in gene expression, shifting from rapid growth to stress survival by linking envelope stress, the stringent response and the catabolite repression systems. Usually binds in the 5'-UTR; binding at or near the Shine-Dalgarno sequence prevents ribosome-binding, repressing translation, binding elsewhere in the 5'-UTR can activate translation and/or stabilize the mRNA. Its function is antagonized by small RNA(s). In Histophilus somni (strain 2336) (Haemophilus somnus), this protein is Translational regulator CsrA.